Reading from the N-terminus, the 165-residue chain is Protein SprT (165 aa).

Residues 10–158 (EACYRQAEHF…CRRCKATLVF (149 aa)) form the SprT-like domain. His-69 is a Zn(2+) binding site. Glu-70 is a catalytic residue. His-73 contributes to the Zn(2+) binding site.

The protein belongs to the SprT family. Zn(2+) is required as a cofactor.

It is found in the cytoplasm. The protein is Protein SprT of Pseudomonas aeruginosa (strain UCBPP-PA14).